Consider the following 69-residue polypeptide: Cap-specific mRNA (nucleoside-2'-O-)-methyltransferase (69 aa).

Tyrosine 22 is an mRNA binding site. S-adenosyl-L-methionine-binding residues include glutamine 39, tyrosine 66, and glycine 68.

It belongs to the class I-like SAM-binding methyltransferase superfamily. Poxvirus/kinetoplastid 2'-O-MTase family. As to quaternary structure, interacts with poly(A) polymerase catalytic subunit OPG063. Interacts with OPG109 and OPG123; these interactions might help linking transcription to capping and polyadenylation.

It localises to the virion. It carries out the reaction a 5'-end (N(7)-methyl 5'-triphosphoguanosine)-ribonucleoside in mRNA + S-adenosyl-L-methionine = a 5'-end (N(7)-methyl 5'-triphosphoguanosine)-(2'-O-methyl-ribonucleoside) in mRNA + S-adenosyl-L-homocysteine + H(+). Functionally, displays methyltransferase, positive regulation of the poly(A) polymerase and transcription elongation activities. Involved in the modification of both mRNA ends and in intermediate and late gene positive transcription elongation. At the mRNAs 5' end, methylates the ribose 2' OH group of the first transcribed nucleotide, thereby producing a 2'-O-methylpurine cap. At the 3' end, functions as a processivity factor which stimulates the activity of the viral poly(A) polymerase OPG063 that creates mRNA's poly(A) tail. In the presence of OPG102, OPG063 does not dissociate from the RNA allowing tail elongation to around 250 adenylates. The chain is Cap-specific mRNA (nucleoside-2'-O-)-methyltransferase (OPG102) from Sus scrofa (Pig).